The following is a 326-amino-acid chain: Protein spaetzle (326 aa).

The signal sequence occupies residues 1–25 (MMTPMWISLFKVLLLLFAFFATYEA). An N-linked (GlcNAc...) asparagine glycan is attached at Asn-48. Residues 56-82 (FMPIPTQHDDPTQKQKQNQNQSPIPET) form a disordered region. Residues 69 to 80 (KQKQNQNQSPIP) show a composition bias toward polar residues. N-linked (GlcNAc...) asparagine glycans are attached at residues Asn-114 and Asn-164. The tract at residues 152 to 174 (YRPPQSPARPLRNDTKEHNPCAK) is disordered. Basic and acidic residues predominate over residues 162–174 (LRNDTKEHNPCAK). A Spaetzle domain is found at 228-322 (FLCRSIRKLV…FKIPSCCKCA (95 aa)). Disulfide bonds link Cys-230/Cys-288, Cys-267/Cys-319, and Cys-274/Cys-321.

In terms of assembly, homodimer; disulfide-linked. In the presence of Tl, crystal structures show one Tl molecule bound to a spaetzle C-106 homodimer. However, the active complex probably consists of two Tl molecules bound to a spaetzle C-106 homodimer. This is supported by in vitro experiments which also show binding of the spaetzle C-106 dimer to 2 Tl receptors. Ligand binding induces conformational changes in the extracellular domain of Tl. This may enable a secondary homodimerization interface at the C-terminus of the Tl extracellular domain. Post-translationally, during embryonic development proteolytically processed by activated ea/easter; ea cleaves the signal peptide and also generates the C-terminal 12 kDa active ligand for the Toll receptor, C-106 (except for isoform 8.24 and isoform 11.27 as they do not contain the cleavage site). During the immune response, cleaved in the same manner by SPE. In terms of processing, extracellular forms of isoform 8.19 and isoform 11.7 are glycosylated.

The protein resides in the secreted. The activated form, spaetzle C-106, acts as a ligand for the Toll receptor. Binding to Toll activates the Toll signaling pathway and induces expression of the antifungal peptide drosomycin. Component of the extracellular signaling pathway that establishes dorsal-ventral polarity in the embryo. In Drosophila melanogaster (Fruit fly), this protein is Protein spaetzle.